The chain runs to 256 residues: Cell division protein DivIB (256 aa).

The Cytoplasmic portion of the chain corresponds to 1–23 (MSKDLISTDEYIKIKKKRKRIKK). A helical membrane pass occupies residues 24–44 (IVVLFIFLISILVTLCLKIPY). The 69-residue stretch at 45–113 (FNIESIEIKG…NKLEIYVKER (69 aa)) folds into the POTRA domain. Over 45–256 (FNIESIEIKG…EGNPVFYIEK (212 aa)) the chain is Extracellular.

The protein belongs to the FtsQ/DivIB family. DivIB subfamily.

It is found in the cell membrane. Cell division protein that may be involved in stabilizing or promoting the assembly of the division complex. This Clostridium botulinum (strain Loch Maree / Type A3) protein is Cell division protein DivIB.